Here is a 155-residue protein sequence, read N- to C-terminus: Putative pre-16S rRNA nuclease (155 aa).

Positions 136 to 155 (DAERATSRPPGHPVEPRIGP) are disordered.

It belongs to the YqgF nuclease family.

The protein resides in the cytoplasm. Could be a nuclease involved in processing of the 5'-end of pre-16S rRNA. The polypeptide is Putative pre-16S rRNA nuclease (Leifsonia xyli subsp. xyli (strain CTCB07)).